Consider the following 577-residue polypeptide: Insulin-like growth factor 2 mRNA-binding protein 1 (577 aa).

2 consecutive RRM domains span residues Asn-2–Pro-75 and Arg-81–Asp-156. Phosphoserine is present on residues Ser-12 and Ser-73. The interval Asp-156–Lys-190 is disordered. The residue at position 181 (Ser-181) is a Phosphoserine; by MTOR. 4 KH domains span residues Asp-195–Ile-260, Glu-276–Ile-343, Gln-405–Ile-470, and Lys-487–Ile-553. A sufficient for nuclear export region spans residues Ile-312–Pro-323. Positions Glu-485 to Pro-495 are sufficient for nuclear export. At Thr-528 the chain carries Phosphothreonine.

Belongs to the RRM IMP/VICKZ family. Can form homodimers and heterodimers with IGF2BP1 and IGF2BP3. Component of the coding region determinant (CRD)-mediated complex, composed of DHX9, HNRNPU, IGF2BP1, SYNCRIP and YBX1. Identified in a mRNP complex, at least composed of DHX9, DDX3X, ELAVL1, HNRNPU, IGF2BP1, ILF3, PABPC1, PCBP2, PTBP2, STAU1, STAU2, SYNCRIP and YBX1. Associates with mRNP complex. Interacts with FMR1. Component of a multisubunit autoregulatory RNP complex (ARC), at least composed of IGF2BP1, PABPC1 and CSDE1. Interacts with AGO1 and AGO2. Interacts, through domains KH3 and KH4, with PABPC1 in an RNA-independent manner. Component of a TAU mRNP complex, at least composed of IGF2BP1, ELAVL4 and G3BP. Interacts with ELAVL4 in an RNA-dependent manner. Associates with microtubules and polysomes. Interacts with ELAVL1 and MATR3. Post-translationally, phosphorylated at Ser-181 by mTORC2 cotranslationally, promoting binding to the 3'-UTR of IGF2 mRNA. Expressed in zygotes and blastocysts (at protein level). Expressed in brain, skeletal muscle, trophoblasts of placenta, oocytes and spermatogonia (at protein level). Expressed in testis and ovary. Following colon injury, expressed in the wound bed mesenchyme during the first phase of repair, probably by colonic mesenchymal stem cells (at protein level).

It is found in the nucleus. The protein resides in the cytoplasm. It localises to the perinuclear region. Its subcellular location is the P-body. The protein localises to the stress granule. It is found in the cell projection. The protein resides in the lamellipodium. It localises to the dendrite. Its subcellular location is the dendritic spine. The protein localises to the growth cone. It is found in the filopodium. The protein resides in the axon. Functionally, RNA-binding factor that recruits target transcripts to cytoplasmic protein-RNA complexes (mRNPs). This transcript 'caging' into mRNPs allows mRNA transport and transient storage. It also modulates the rate and location at which target transcripts encounter the translational apparatus and shields them from endonuclease attacks or microRNA-mediated degradation. Preferentially binds to N6-methyladenosine (m6A)-containing mRNAs and increases their stability. Regulates localized beta-actin/ACTB mRNA translation, a crucial process for cell polarity, cell migration and neurite outgrowth. Co-transcriptionally associates with the ACTB mRNA in the nucleus. This binding involves a conserved 54-nucleotide element in the ACTB mRNA 3'-UTR, known as the 'zipcode'. The RNP thus formed is exported to the cytoplasm, binds to a motor protein and is transported along the cytoskeleton to the cell periphery. During transport, prevents ACTB mRNA from being translated into protein. When the RNP complex reaches its destination near the plasma membrane, IGF2BP1 is phosphorylated. This releases the mRNA, allowing ribosomal 40S and 60S subunits to assemble and initiate ACTB protein synthesis. Monomeric ACTB then assembles into the subcortical actin cytoskeleton. During neuronal development, key regulator of neurite outgrowth, growth cone guidance and neuronal cell migration, presumably through the spatiotemporal fine tuning of protein synthesis, such as that of ACTB. May regulate mRNA transport to activated synapses. Binds to the 3'-UTR of CD44 mRNA and stabilizes it, hence promotes cell adhesion and invadopodia formation in cancer cells. Binds to the oncofetal H19 transcript and regulates its localization. Binds to and stabilizes BTRC/FBW1A mRNA. Binds to the adenine-rich autoregulatory sequence (ARS) located in PABPC1 mRNA and represses its translation. PABPC1 mRNA-binding is stimulated by PABPC1 protein. Prevents BTRC/FBW1A mRNA degradation by disrupting microRNA-dependent interaction with AGO2. During cellular stress, such as oxidative stress or heat shock, stabilizes target mRNAs that are recruited to stress granules, including CD44, IGF2, MAPK4, MYC, PTEN, RAPGEF2 and RPS6KA5 transcripts. Interacts with GAP43 transcript and transports it to axons. Binds to the 3'-UTR of IGF2 mRNA by a mechanism of cooperative and sequential dimerization and regulates IGF2 mRNA subcellular localization and translation. Binds to MYC mRNA, in the coding region instability determinant (CRD) of the open reading frame (ORF), hence prevents MYC cleavage by endonucleases and possibly microRNA targeting to MYC-CRD. Binding to MYC mRNA is enhanced by m6A-modification of the CRD. Binds to and stabilizes ABCB1/MDR-1 mRNA. Binds to the neuron-specific TAU mRNA and regulates its localization. Plays a direct role in the transport and translation of transcripts required for axonal regeneration in adult sensory neurons. During interstinal wound repair, interacts with and stabilizes PTGS2 transcript. PTGS2 mRNA stabilization may be crucial for colonic mucosal wound healing. In Mus musculus (Mouse), this protein is Insulin-like growth factor 2 mRNA-binding protein 1 (Igf2bp1).